A 428-amino-acid chain; its full sequence is Cyclic AMP-responsive element-binding protein 3-like protein 3-B (428 aa).

Residues 1-286 (MDHYSDQGGD…VMNGSNKPVQ (286 aa)) lie on the Cytoplasmic side of the membrane. A compositionally biased stretch (low complexity) spans 67 to 83 (VSGSPVWSPSPSDSGIS). Residues 67-104 (VSGSPVWSPSPSDSGISEDPHSDHIDSPPPNASPPMEP) form a disordered region. A compositionally biased stretch (pro residues) spans 93–103 (SPPPNASPPME). A bZIP domain is found at 210-273 (ILKKIRRKIR…ISLMEQLRRL (64 aa)). A basic motif region spans residues 212–241 (KKIRRKIRNKQSAQESRKKKKEYIDGLESR). Positions 252 to 273 (LQRKVFQLEKCNISLMEQLRRL) are leucine-zipper. The chain crosses the membrane as a helical; Signal-anchor for type II membrane protein span at residues 287–303 (AGTCVLVLLLSFTLILL). The Lumenal segment spans residues 304-428 (PNLKPFTDTK…SRRSPHADDM (125 aa)). The tract at residues 381 to 428 (TEYDPESHNHSFDQHDEHHHGDPITGHVATVTLNPRRGSRRSPHADDM) is disordered. Basic and acidic residues predominate over residues 385 to 402 (PESHNHSFDQHDEHHHGD). Residue asparagine 389 is glycosylated (N-linked (GlcNAc...) asparagine).

The protein belongs to the bZIP family. ATF subfamily. In terms of assembly, binds DNA as a dimer. Post-translationally, controlled by regulated intramembrane proteolysis (RIP). A fragment containing the cytoplasmic transcription factor domain is released by proteolysis. The cleavage seems to be performed sequentially by site-1 and site-2 proteases.

The protein localises to the endoplasmic reticulum membrane. It is found in the nucleus. Transcriptional activator. Binds the cAMP response element (CRE). Activates transcription through box-B element and CRE. Seems to function synergistically with atf6. Regulates FGF21 transcription. The chain is Cyclic AMP-responsive element-binding protein 3-like protein 3-B (creb3l3b) from Danio rerio (Zebrafish).